Consider the following 590-residue polypeptide: MSRTPSSLDKDKGSSEFVENMNEIEIIEHTRVPSDKPSGFGGHLIDENLVKVEGEDKVTPYLCFLISASAIAGFLFGYDTGVVGVALPLVGTDLGGSVLSSSQQEIITAGTTIGAIFGSAILGGWGDRLGRKVAILIADVFFTVGAVLIAASYSVPQMIVGRIVLGVGVGGAAAIAPLFITETAPTAVRGRCIGVNAFFIPFGQVISEAIGAGVQDMKNGWRLLFALGAVPSLFQLILFHYLPESPRILILRGQTDRARHVFSRIYPNATPEMIDYKFRVAQEYVTATTVLQSGTTYWQRTKTLFTKGSYRRSIVTVSLIQMAGQLSGFNTLLYYAGTLFSLLGLTNPALGGLIPAGTNAFFVLVGMTLVDKVGRRGLLMFGVPIMLAGLVWNIVAFHYLCIPTGGLLDTSYKYDTKLVGIVIGGIVFFTTGFGLTYSHLAWYQSEFLALEVRSVGSGIATTANWVANLVVSVSYLTELETLTPSGTYGLYLGFSVVFFIFAVFCYPETKQLSIDETSLLFEEDWGVKRSREMRRERRETQRRLADSEMTEVATAHVQAQKQKDSAVTRSELDNFMEELKNGAKRFPISR.

At 1-63 the chain is on the cytoplasmic side; the sequence is MSRTPSSLDK…GEDKVTPYLC (63 aa). Residues 64–86 traverse the membrane as a helical segment; the sequence is FLISASAIAGFLFGYDTGVVGVA. Residues 87 to 105 are Extracellular-facing; the sequence is LPLVGTDLGGSVLSSSQQE. The helical transmembrane segment at 106–126 threads the bilayer; the sequence is IITAGTTIGAIFGSAILGGWG. At 127–132 the chain is on the cytoplasmic side; the sequence is DRLGRK. The helical transmembrane segment at 133–153 threads the bilayer; sequence VAILIADVFFTVGAVLIAASY. Topologically, residues 154 to 162 are extracellular; the sequence is SVPQMIVGR. A helical transmembrane segment spans residues 163–183; it reads IVLGVGVGGAAAIAPLFITET. Residues 184–192 lie on the Cytoplasmic side of the membrane; it reads APTAVRGRC. Residues 193–213 traverse the membrane as a helical segment; sequence IGVNAFFIPFGQVISEAIGAG. Residues 214–222 lie on the Extracellular side of the membrane; it reads VQDMKNGWR. The helical transmembrane segment at 223-243 threads the bilayer; sequence LLFALGAVPSLFQLILFHYLP. The Cytoplasmic portion of the chain corresponds to 244-325; it reads ESPRILILRG…TVSLIQMAGQ (82 aa). A helical transmembrane segment spans residues 326-346; the sequence is LSGFNTLLYYAGTLFSLLGLT. The Extracellular segment spans residues 347 to 349; sequence NPA. A helical membrane pass occupies residues 350–370; that stretch reads LGGLIPAGTNAFFVLVGMTLV. Residues 371 to 376 lie on the Cytoplasmic side of the membrane; sequence DKVGRR. A helical transmembrane segment spans residues 377–397; sequence GLLMFGVPIMLAGLVWNIVAF. Over 398–417 the chain is Extracellular; that stretch reads HYLCIPTGGLLDTSYKYDTK. Residues 418–438 traverse the membrane as a helical segment; that stretch reads LVGIVIGGIVFFTTGFGLTYS. Residues 439–454 are Cytoplasmic-facing; sequence HLAWYQSEFLALEVRS. Residues 455–475 form a helical membrane-spanning segment; the sequence is VGSGIATTANWVANLVVSVSY. At 476-485 the chain is on the extracellular side; the sequence is LTELETLTPS. The helical transmembrane segment at 486-506 threads the bilayer; it reads GTYGLYLGFSVVFFIFAVFCY. Over 507–590 the chain is Cytoplasmic; it reads PETKQLSIDE…NGAKRFPISR (84 aa).

This sequence belongs to the major facilitator superfamily. Sugar transporter (TC 2.A.1.1) family.

Its subcellular location is the cell membrane. The catalysed reaction is myo-inositol(out) + H(+)(out) = myo-inositol(in) + H(+)(in). In terms of biological role, major transporter for myo-inositol. Plays a role in the traversal of the host blood-brain barrier. This Cryptococcus neoformans var. grubii serotype A (strain H99 / ATCC 208821 / CBS 10515 / FGSC 9487) (Filobasidiella neoformans var. grubii) protein is Myo-inositol transporter 3C.